Consider the following 930-residue polypeptide: Translation initiation factor IF-2 (930 aa).

The interval F31 to E317 is disordered. The segment covering P61–A78 has biased composition (low complexity). Pro residues-rich tracts occupy residues R79–A99 and P108–P120. Residues A121–A135 show a composition bias toward low complexity. Composition is skewed to pro residues over residues R136–R158 and P178–G192. A compositionally biased stretch (gly residues) spans P193–R205. Pro residues predominate over residues N212 to T242. The segment covering G244–G301 has biased composition (gly residues). Over residues K305–K314 the composition is skewed to basic residues. The tr-type G domain maps to F426–D598. Positions G435–T442 are G1. G435 to T442 provides a ligand contact to GTP. Residues G460–H464 form a G2 region. Positions D485 to G488 are G3. GTP-binding positions include D485–H489 and N539–D542. The interval N539 to D542 is G4. Residues S575–K577 are G5.

Belongs to the TRAFAC class translation factor GTPase superfamily. Classic translation factor GTPase family. IF-2 subfamily.

Its subcellular location is the cytoplasm. In terms of biological role, one of the essential components for the initiation of protein synthesis. Protects formylmethionyl-tRNA from spontaneous hydrolysis and promotes its binding to the 30S ribosomal subunits. Also involved in the hydrolysis of GTP during the formation of the 70S ribosomal complex. The polypeptide is Translation initiation factor IF-2 (Mycolicibacterium gilvum (strain PYR-GCK) (Mycobacterium gilvum (strain PYR-GCK))).